Here is a 131-residue protein sequence, read N- to C-terminus: UPF0102 protein AZC_4471 (131 aa).

This sequence belongs to the UPF0102 family.

The sequence is that of UPF0102 protein AZC_4471 from Azorhizobium caulinodans (strain ATCC 43989 / DSM 5975 / JCM 20966 / LMG 6465 / NBRC 14845 / NCIMB 13405 / ORS 571).